We begin with the raw amino-acid sequence, 600 residues long: MTASPKNEMSTVFKRLMTYVMPMKGMLTLSILGLIVYGLVDAAFIAFIKPFIDEGFSQNPTVVAGVELPTSGGFSANKDVMLMAPLVVIGMFTLRGVANFVSTYCISYLSAQLIMDMRQQVFEHYLRLPVSYIDRENSGNLISRVTFDTEQIARASGSALISIVRDSITVIGMLALMFFYSWKLSLCILVIGPLMGVVISIVSKRFRKVSVQIQSAMGGVTATTEQMIKGHKNVLSFGGQETESKRFYEVNDRNRYQNMKLAMAQSVSQPVIMIIGSFALAFVLYAASLDSMKLELTAGTFAAILGAMLAMLQPIKNLTRVNAEFQRGIAACTTVFELLDTLPESDTGAHQVERVQGHLRFDNVSFSYPGQAKPALNNIDFDVKPGKTVALVGRSGSGKSTMASLITRFYTGLEQGDIRLDDVSIYDYSLKSLRSQVALVSQQVTLFNDSIANNIAYAYPGEVSREQILKAATLAHAMEFIEQLPEGLDTQVGENGVLLSGGQRQRIAIARAMLRDAPVLILDEATSALDTESEKAIQLGLDNLRHNRTSIVIAHRLSTIESADEILVIDQGKIIERGTHASLIEKKGAYAGLYQMQFGE.

6 helical membrane-spanning segments follow: residues 28-48, 80-100, 159-179, 182-202, 267-287, and 295-315; these read TLSI…IAFI, VMLM…VANF, ALIS…LMFF, WKLS…ISIV, VSQP…LYAA, and ELTA…LQPI. Residues 29–327 form the ABC transmembrane type-1 domain; the sequence is LSILGLIVYG…LTRVNAEFQR (299 aa). In terms of domain architecture, ABC transporter spans 359 to 596; that stretch reads LRFDNVSFSY…KGAYAGLYQM (238 aa). 393-400 provides a ligand contact to ATP; the sequence is GRSGSGKS.

It belongs to the ABC transporter superfamily. Lipid exporter (TC 3.A.1.106) family. As to quaternary structure, homodimer.

The protein resides in the cell inner membrane. It catalyses the reaction ATP + H2O + lipid A-core oligosaccharideSide 1 = ADP + phosphate + lipid A-core oligosaccharideSide 2.. Involved in lipopolysaccharide (LPS) biosynthesis. Translocates lipid A-core from the inner to the outer leaflet of the inner membrane. Transmembrane domains (TMD) form a pore in the inner membrane and the ATP-binding domain (NBD) is responsible for energy generation. The polypeptide is ATP-dependent lipid A-core flippase (Shewanella denitrificans (strain OS217 / ATCC BAA-1090 / DSM 15013)).